The primary structure comprises 266 residues: UPF0246 protein Pcryo_0542 (266 aa).

This sequence belongs to the UPF0246 family.

In Psychrobacter cryohalolentis (strain ATCC BAA-1226 / DSM 17306 / VKM B-2378 / K5), this protein is UPF0246 protein Pcryo_0542.